The chain runs to 236 residues: Large ribosomal subunit protein uL1 (236 aa).

Belongs to the universal ribosomal protein uL1 family. As to quaternary structure, part of the 50S ribosomal subunit.

In terms of biological role, binds directly to 23S rRNA. The L1 stalk is quite mobile in the ribosome, and is involved in E site tRNA release. Protein L1 is also a translational repressor protein, it controls the translation of the L11 operon by binding to its mRNA. The sequence is that of Large ribosomal subunit protein uL1 from Acidobacterium capsulatum (strain ATCC 51196 / DSM 11244 / BCRC 80197 / JCM 7670 / NBRC 15755 / NCIMB 13165 / 161).